The chain runs to 706 residues: MISSVRNCGTIQRFCTTSISLLQKPVEENIVRISNQVMVKFDPNSHLRSLINAGNLRAARQVFDKMPHGDIVSWTSIIKRYVTANNSDEALILFSAMRVVDHAVSPDTSVLSVVLKACGQSSNIAYGESLHAYAVKTSLLSSVYVGSSLLDMYKRVGKIDKSCRVFSEMPFRNAVTWTAIITGLVHAGRYKEGLTYFSEMSRSEELSDTYTFAIALKACAGLRQVKYGKAIHTHVIVRGFVTTLCVANSLATMYTECGEMQDGLCLFENMSERDVVSWTSLIVAYKRIGQEVKAVETFIKMRNSQVPPNEQTFASMFSACASLSRLVWGEQLHCNVLSLGLNDSLSVSNSMMKMYSTCGNLVSASVLFQGMRCRDIISWSTIIGGYCQAGFGEEGFKYFSWMRQSGTKPTDFALASLLSVSGNMAVIEGGRQVHALALCFGLEQNSTVRSSLINMYSKCGSIKEASMIFGETDRDDIVSLTAMINGYAEHGKSKEAIDLFEKSLKVGFRPDSVTFISVLTACTHSGQLDLGFHYFNMMQETYNMRPAKEHYGCMVDLLCRAGRLSDAEKMINEMSWKKDDVVWTTLLIACKAKGDIERGRRAAERILELDPTCATALVTLANIYSSTGNLEEAANVRKNMKAKGVIKEPGWSSIKIKDCVSAFVSGDRFHPQSEDIYNILELAVSGAEAHRFDCTLKRAFGVNLYS.

PPR repeat units follow at residues 39-69 (VKFDPNSHLRSLINAGNLRAARQVFDKMPHG), 70-104 (DIVSWTSIIKRYVTANNSDEALILFSAMRVVDHAV), 107-141 (DTSVLSVVLKACGQSSNIAYGESLHAYAVKTSLLS), 142-172 (SVYVGSSLLDMYKRVGKIDKSCRVFSEMPFR), 173-203 (NAVTWTAIITGLVHAGRYKEGLTYFSEMSRS), 208-242 (DTYTFAIALKACAGLRQVKYGKAIHTHVIVRGFVT), 243-273 (TLCVANSLATMYTECGEMQDGLCLFENMSER), 274-308 (DVVSWTSLIVAYKRIGQEVKAVETFIKMRNSQVPP), 309-343 (NEQTFASMFSACASLSRLVWGEQLHCNVLSLGLND), 344-374 (SLSVSNSMMKMYSTCGNLVSASVLFQGMRCR), 375-409 (DIISWSTIIGGYCQAGFGEEGFKYFSWMRQSGTKP), 410-444 (TDFALASLLSVSGNMAVIEGGRQVHALALCFGLEQ), 445-475 (NSTVRSSLINMYSKCGSIKEASMIFGETDRD), 476-510 (DIVSLTAMINGYAEHGKSKEAIDLFEKSLKVGFRP), 511-541 (DSVTFISVLTACTHSGQLDLGFHYFNMMQET), and 547-577 (AKEHYGCMVDLLCRAGRLSDAEKMINEMSWK). Residues 582 to 657 (VWTTLLIACK…EPGWSSIKIK (76 aa)) are type E motif. The segment at 658–688 (DCVSAFVSGDRFHPQSEDIYNILELAVSGAE) is type E(+) motif.

This sequence belongs to the PPR family. PCMP-E subfamily.

The chain is Putative pentatricopeptide repeat-containing protein At3g47840 (PCMP-E43) from Arabidopsis thaliana (Mouse-ear cress).